A 316-amino-acid polypeptide reads, in one-letter code: Transaldolase (316 aa).

Lysine 132 acts as the Schiff-base intermediate with substrate in catalysis.

Belongs to the transaldolase family. Type 1 subfamily.

It localises to the cytoplasm. The catalysed reaction is D-sedoheptulose 7-phosphate + D-glyceraldehyde 3-phosphate = D-erythrose 4-phosphate + beta-D-fructose 6-phosphate. Its pathway is carbohydrate degradation; pentose phosphate pathway; D-glyceraldehyde 3-phosphate and beta-D-fructose 6-phosphate from D-ribose 5-phosphate and D-xylulose 5-phosphate (non-oxidative stage): step 2/3. In terms of biological role, transaldolase is important for the balance of metabolites in the pentose-phosphate pathway. The protein is Transaldolase of Vibrio cholerae serotype O1 (strain ATCC 39315 / El Tor Inaba N16961).